The following is an 81-amino-acid chain: ATP synthase subunit c (81 aa).

2 helical membrane-spanning segments follow: residues 14–34 and 60–80; these read YLGA…IGTV and LAFA…LLFV.

It belongs to the ATPase C chain family. F-type ATPases have 2 components, F(1) - the catalytic core - and F(0) - the membrane proton channel. F(1) has five subunits: alpha(3), beta(3), gamma(1), delta(1), epsilon(1). F(0) has three main subunits: a(1), b(2) and c(10-14). The alpha and beta chains form an alternating ring which encloses part of the gamma chain. F(1) is attached to F(0) by a central stalk formed by the gamma and epsilon chains, while a peripheral stalk is formed by the delta and b chains.

Its subcellular location is the cell membrane. Functionally, f(1)F(0) ATP synthase produces ATP from ADP in the presence of a proton or sodium gradient. F-type ATPases consist of two structural domains, F(1) containing the extramembraneous catalytic core and F(0) containing the membrane proton channel, linked together by a central stalk and a peripheral stalk. During catalysis, ATP synthesis in the catalytic domain of F(1) is coupled via a rotary mechanism of the central stalk subunits to proton translocation. In terms of biological role, key component of the F(0) channel; it plays a direct role in translocation across the membrane. A homomeric c-ring of between 10-14 subunits forms the central stalk rotor element with the F(1) delta and epsilon subunits. The polypeptide is ATP synthase subunit c (Clostridium acetobutylicum (strain ATCC 824 / DSM 792 / JCM 1419 / IAM 19013 / LMG 5710 / NBRC 13948 / NRRL B-527 / VKM B-1787 / 2291 / W)).